The sequence spans 203 residues: Small ribosomal subunit protein uS4c (203 aa).

The tract at residues 19-43 is disordered; that stretch reads PGLTNKSPKAGSDLRKQPRSRKKSQ. Residues 89-152 form the S4 RNA-binding domain; sequence MRLDNILFRL…KSRTLIQNSL (64 aa).

The protein belongs to the universal ribosomal protein uS4 family. In terms of assembly, part of the 30S ribosomal subunit. Contacts protein S5. The interaction surface between S4 and S5 is involved in control of translational fidelity.

Its subcellular location is the plastid. It localises to the chloroplast. Functionally, one of the primary rRNA binding proteins, it binds directly to 16S rRNA where it nucleates assembly of the body of the 30S subunit. With S5 and S12 plays an important role in translational accuracy. This Jasminum nudiflorum (Winter jasmine) protein is Small ribosomal subunit protein uS4c (rps4).